Here is a 147-residue protein sequence, read N- to C-terminus: Phosphoribosyl-AMP cyclohydrolase (147 aa).

Position 91 (Asp-91) interacts with Mg(2+). Zn(2+) is bound at residue Cys-92. Mg(2+) contacts are provided by Asp-93 and Asp-95. The Zn(2+) site is built by Cys-109 and Cys-116.

This sequence belongs to the PRA-CH family. As to quaternary structure, homodimer. The cofactor is Mg(2+). Zn(2+) is required as a cofactor.

It is found in the cytoplasm. It carries out the reaction 1-(5-phospho-beta-D-ribosyl)-5'-AMP + H2O = 1-(5-phospho-beta-D-ribosyl)-5-[(5-phospho-beta-D-ribosylamino)methylideneamino]imidazole-4-carboxamide. The protein operates within amino-acid biosynthesis; L-histidine biosynthesis; L-histidine from 5-phospho-alpha-D-ribose 1-diphosphate: step 3/9. In terms of biological role, catalyzes the hydrolysis of the adenine ring of phosphoribosyl-AMP. This Rhodopseudomonas palustris (strain BisA53) protein is Phosphoribosyl-AMP cyclohydrolase.